Reading from the N-terminus, the 385-residue chain is O-phospho-L-seryl-tRNA:Cys-tRNA synthase (385 aa).

Residues 89–90, Asn-195, and 218–220 contribute to the pyridoxal 5'-phosphate site; these read AR and SGH. Lys-221 is subject to N6-(pyridoxal phosphate)lysine.

Belongs to the SepCysS family. As to quaternary structure, homodimer. Interacts with SepRS. The cofactor is pyridoxal 5'-phosphate.

The catalysed reaction is O-phospho-L-seryl-tRNA(Cys) + hydrogen sulfide + H(+) = L-cysteinyl-tRNA(Cys) + phosphate. Converts O-phospho-L-seryl-tRNA(Cys) (Sep-tRNA(Cys)) to L-cysteinyl-tRNA(Cys) (Cys-tRNA(Cys)). The chain is O-phospho-L-seryl-tRNA:Cys-tRNA synthase from Methanococcus aeolicus (strain ATCC BAA-1280 / DSM 17508 / OCM 812 / Nankai-3).